The chain runs to 482 residues: Zinc metalloproteinase/disintegrin (482 aa).

Residues M1 to S20 form the signal peptide. Positions M21–A189 are excised as a propeptide. The region spanning R197–P393 is the Peptidase M12B domain. The Ca(2+) site is built by E200 and D284. Intrachain disulfides connect C308/C388 and C348/C372. H333 lines the Zn(2+) pocket. Residue E334 is part of the active site. Zn(2+)-binding residues include H337 and H343. 2 residues coordinate Ca(2+): C388 and N391. The propeptide occupies L394–L409. The Disintegrin domain maps to T401–A482. 6 disulfide bridges follow: C415–C430, C417–C425, C424–C447, C438–C444, C443–C468, and C456–C475. The Cell attachment site motif lies at R460 to D462.

The protein belongs to the venom metalloproteinase (M12B) family. P-II subfamily. P-IId sub-subfamily. As to quaternary structure, homodimer; disulfide-linked (disintegrin). It depends on Zn(2+) as a cofactor. As to expression, expressed by the venom gland.

The protein localises to the secreted. Its function is as follows. This recombinant protein hydrolyzes fibronectin, but has no effect on type I gelatin and type I to V collagens. Selectively hydrolyzes the Aalpha-chain of fibrinogen (FGA), but has no effect on fibrin. Functionally, inhibits ADP-induced platelet aggregation. Recombinant metalloproteinase-disintegrin Mt-d-I (393-408): hydrolyzes type I gelatin, type III and V collagens, but has no effect on type I, II, IV collagens and fibronectin. Selectively hydrolyzes the Aalpha-chain of fibrinogen, but has no effect on fibrin. May induce hemorrhage in vascular tissue. Strongly inhibits ADP-induced platelet aggregation. When concentrated, Mt-d-I undergoes autoproteolytic processing into metalloproteinase and disintegrin. The sequence is that of Zinc metalloproteinase/disintegrin from Gloydius brevicauda (Korean slamosa snake).